Reading from the N-terminus, the 439-residue chain is Protein CNPPD1 (439 aa).

The chain crosses the membrane as a helical span at residues 231–251 (CLLGVVYLTGFAAVFTSIAVV). The segment at 283–302 (ALAPEQPQPKLPDVSPPSST) is disordered.

It belongs to the CNPPD1 family.

It localises to the membrane. This Gallus gallus (Chicken) protein is Protein CNPPD1 (CNPPD1).